We begin with the raw amino-acid sequence, 177 residues long: MYCLFCQHTDTRVIDSRVSEDGATIRRRRECEACGERFSTLETIELKLPVIIKKDGGREAFDGRKLRTSFDRALQKRPVAEERIEMAMRAVIHRLRMAGEREVPSIVVGECVMAELRKLDHVGYVRFASVYRSFQDVADFREEIEKLESELLVSREQLPLLEAVMESIGHPSIDQGG.

A zinc finger lies at C3–C34. An ATP-cone domain is found at P49–D139.

Belongs to the NrdR family. Requires Zn(2+) as cofactor.

Functionally, negatively regulates transcription of bacterial ribonucleotide reductase nrd genes and operons by binding to NrdR-boxes. The sequence is that of Transcriptional repressor NrdR from Xylella fastidiosa (strain M23).